The following is a 481-amino-acid chain: 6-phosphogluconate dehydrogenase, decarboxylating (481 aa).

NADP(+) is bound by residues 11–16 (GLAVMG), 34–36 (NRT), 76–78 (VKG), and N104. Substrate is bound by residues N104 and 130 to 132 (SGG). Residue K184 is the Proton acceptor of the active site. Substrate is bound at residue 187–188 (HN). E191 acts as the Proton donor in catalysis. Y192, K259, R286, R445, and H451 together coordinate substrate.

This sequence belongs to the 6-phosphogluconate dehydrogenase family. As to quaternary structure, homodimer.

The catalysed reaction is 6-phospho-D-gluconate + NADP(+) = D-ribulose 5-phosphate + CO2 + NADPH. It functions in the pathway carbohydrate degradation; pentose phosphate pathway; D-ribulose 5-phosphate from D-glucose 6-phosphate (oxidative stage): step 3/3. In terms of biological role, catalyzes the oxidative decarboxylation of 6-phosphogluconate to ribulose 5-phosphate and CO(2), with concomitant reduction of NADP to NADPH. This chain is 6-phosphogluconate dehydrogenase, decarboxylating (Pgd), found in Drosophila simulans (Fruit fly).